The following is a 737-amino-acid chain: Zinc finger protein 184 (737 aa).

In terms of domain architecture, KRAB spans 28-99 (VTFKDVVVNF…DSCIPVGPLE (72 aa)). Phosphoserine is present on serine 117. Lysine 185 participates in a covalent cross-link: Glycyl lysine isopeptide (Lys-Gly) (interchain with G-Cter in SUMO2). C2H2-type zinc fingers lie at residues 201–223 (CKCN…QRTH), 229–251 (YKCN…QRIH), 257–279 (YKCD…QRIH), 285–307 (YKCD…QRIH), 313–335 (YTCT…QKIH), 341–363 (FKCE…QKIH), 369–391 (YKCN…HMIH), 397–419 (YECN…QKTH), 425–447 (YDCA…LKIH), 453–475 (YKCS…RRIH), 481–503 (FECS…QKTH), 509–531 (YECK…ERIH), 537–559 (YQCH…KKIH), 565–587 (YKCN…KRIH), 593–615 (YACP…QKTH), 621–643 (YQCN…QRIH), and 649–671 (YKCS…RSTH). The C2H2-type 18; degenerate zinc-finger motif lies at 677 to 698 (YNSECPQTFSQSTYLTQHQKIH). The C2H2-type 19 zinc-finger motif lies at 704–726 (LGCEDCEKAFQCHSALTKHQRLH).

It belongs to the krueppel C2H2-type zinc-finger protein family.

Its subcellular location is the nucleus. In terms of biological role, may be involved in transcriptional regulation. This chain is Zinc finger protein 184 (Zfp184), found in Mus musculus (Mouse).